Consider the following 295-residue polypeptide: Bifunctional protein FolD 1 (295 aa).

Residues 165–167, Ile190, and Ile231 contribute to the NADP(+) site; that span reads GKS.

Belongs to the tetrahydrofolate dehydrogenase/cyclohydrolase family. In terms of assembly, homodimer.

The enzyme catalyses (6R)-5,10-methylene-5,6,7,8-tetrahydrofolate + NADP(+) = (6R)-5,10-methenyltetrahydrofolate + NADPH. It catalyses the reaction (6R)-5,10-methenyltetrahydrofolate + H2O = (6R)-10-formyltetrahydrofolate + H(+). Its pathway is one-carbon metabolism; tetrahydrofolate interconversion. Functionally, catalyzes the oxidation of 5,10-methylenetetrahydrofolate to 5,10-methenyltetrahydrofolate and then the hydrolysis of 5,10-methenyltetrahydrofolate to 10-formyltetrahydrofolate. This chain is Bifunctional protein FolD 1, found in Rhizorhabdus wittichii (strain DSM 6014 / CCUG 31198 / JCM 15750 / NBRC 105917 / EY 4224 / RW1) (Sphingomonas wittichii).